Reading from the N-terminus, the 323-residue chain is Lipoyl synthase (323 aa).

The [4Fe-4S] cluster site is built by cysteine 61, cysteine 66, cysteine 72, cysteine 87, cysteine 91, cysteine 94, and serine 300. The 217-residue stretch at 73–289 (WDKKHATFMI…ETVAYSKGFL (217 aa)) folds into the Radical SAM core domain.

This sequence belongs to the radical SAM superfamily. Lipoyl synthase family. [4Fe-4S] cluster is required as a cofactor.

The protein localises to the cytoplasm. It catalyses the reaction [[Fe-S] cluster scaffold protein carrying a second [4Fe-4S](2+) cluster] + N(6)-octanoyl-L-lysyl-[protein] + 2 oxidized [2Fe-2S]-[ferredoxin] + 2 S-adenosyl-L-methionine + 4 H(+) = [[Fe-S] cluster scaffold protein] + N(6)-[(R)-dihydrolipoyl]-L-lysyl-[protein] + 4 Fe(3+) + 2 hydrogen sulfide + 2 5'-deoxyadenosine + 2 L-methionine + 2 reduced [2Fe-2S]-[ferredoxin]. It participates in protein modification; protein lipoylation via endogenous pathway; protein N(6)-(lipoyl)lysine from octanoyl-[acyl-carrier-protein]: step 2/2. In terms of biological role, catalyzes the radical-mediated insertion of two sulfur atoms into the C-6 and C-8 positions of the octanoyl moiety bound to the lipoyl domains of lipoate-dependent enzymes, thereby converting the octanoylated domains into lipoylated derivatives. The polypeptide is Lipoyl synthase (Rhizobium leguminosarum bv. trifolii (strain WSM2304)).